A 193-amino-acid polypeptide reads, in one-letter code: GTP cyclohydrolase 1 (193 aa).

Zn(2+)-binding residues include Cys-73, His-76, and Cys-144.

The protein belongs to the GTP cyclohydrolase I family. In terms of assembly, homomer.

It catalyses the reaction GTP + H2O = 7,8-dihydroneopterin 3'-triphosphate + formate + H(+). It functions in the pathway cofactor biosynthesis; 7,8-dihydroneopterin triphosphate biosynthesis; 7,8-dihydroneopterin triphosphate from GTP: step 1/1. The protein is GTP cyclohydrolase 1 of Hyperthermus butylicus (strain DSM 5456 / JCM 9403 / PLM1-5).